A 140-amino-acid chain; its full sequence is Transcription antitermination protein NusB (140 aa).

The protein belongs to the NusB family.

Its function is as follows. Involved in transcription antitermination. Required for transcription of ribosomal RNA (rRNA) genes. Binds specifically to the boxA antiterminator sequence of the ribosomal RNA (rrn) operons. This is Transcription antitermination protein NusB from Pseudothermotoga lettingae (strain ATCC BAA-301 / DSM 14385 / NBRC 107922 / TMO) (Thermotoga lettingae).